Here is a 29-residue protein sequence, read N- to C-terminus: Orphan peptide CllNtx (29 aa).

In terms of processing, contains 3 disulfide bonds. Expressed by the venom gland.

The protein localises to the secreted. Its function is as follows. May act as a toxin. This Centruroides limpidus (Mexican scorpion) protein is Orphan peptide CllNtx.